The chain runs to 151 residues: Ribosome maturation factor RimP (151 aa).

This sequence belongs to the RimP family.

Its subcellular location is the cytoplasm. Functionally, required for maturation of 30S ribosomal subunits. This is Ribosome maturation factor RimP from Mannheimia succiniciproducens (strain KCTC 0769BP / MBEL55E).